A 508-amino-acid polypeptide reads, in one-letter code: Beta-glucosidase 10 (508 aa).

Positions 1-22 (MKLYSLLSVFLVILLATSDSDA) are cleaved as a signal peptide. A beta-D-glucoside is bound by residues glutamine 42, histidine 142, and 187–188 (NE). Catalysis depends on glutamate 188, which acts as the Proton donor. Cysteine 207 and cysteine 215 are joined by a disulfide. 2 N-linked (GlcNAc...) asparagine glycosylation sites follow: asparagine 214 and asparagine 219. Tyrosine 331 contributes to the a beta-D-glucoside binding site. N-linked (GlcNAc...) asparagine glycosylation occurs at asparagine 365. Glutamate 398 lines the a beta-D-glucoside pocket. Glutamate 398 acts as the Nucleophile in catalysis. The N-linked (GlcNAc...) asparagine glycan is linked to asparagine 431. A beta-D-glucoside-binding residues include tryptophan 441 and phenylalanine 457. Asparagine 463, asparagine 485, and asparagine 501 each carry an N-linked (GlcNAc...) asparagine glycan.

It belongs to the glycosyl hydrolase 1 family.

It carries out the reaction Hydrolysis of terminal, non-reducing beta-D-glucosyl residues with release of beta-D-glucose.. This chain is Beta-glucosidase 10, found in Arabidopsis thaliana (Mouse-ear cress).